Here is a 436-residue protein sequence, read N- to C-terminus: tRNA (guanine(37)-N(1))-methyltransferase 1 (436 aa).

S-adenosyl-L-methionine-binding positions include His229, Asp277–Leu278, and Asn325.

The protein belongs to the class I-like SAM-binding methyltransferase superfamily. TRM5/TYW2 family. In terms of assembly, monomer.

Its subcellular location is the mitochondrion matrix. The protein resides in the nucleus. The protein localises to the cytoplasm. The enzyme catalyses guanosine(37) in tRNA + S-adenosyl-L-methionine = N(1)-methylguanosine(37) in tRNA + S-adenosyl-L-homocysteine + H(+). Its function is as follows. Specifically methylates the N1 position of guanosine-37 in various cytoplasmic and mitochondrial tRNAs. Methylation is not dependent on the nature of the nucleoside 5' of the target nucleoside. This is the first step in the biosynthesis of wybutosine (yW), a modified base adjacent to the anticodon of tRNAs and required for accurate decoding. In Phaeodactylum tricornutum (strain CCAP 1055/1), this protein is tRNA (guanine(37)-N(1))-methyltransferase 1.